A 128-amino-acid polypeptide reads, in one-letter code: MRHRKSGRQLNRNSSHRKAMFSNMASSLVRHEVIKTTLPKAKELRRVVEPLITLAKTDSVANRRLAFARTRDNEVVAKLFNELGPRFAARQGGYTRILKCGFRAGDKAPMAYIELVDRPEAAVEAAAE.

This sequence belongs to the bacterial ribosomal protein bL17 family. In terms of assembly, part of the 50S ribosomal subunit. Contacts protein L32.

The sequence is that of Large ribosomal subunit protein bL17 from Vibrio cholerae serotype O1 (strain ATCC 39541 / Classical Ogawa 395 / O395).